The sequence spans 308 residues: Tetraacyldisaccharide 4'-kinase (308 aa).

Ser63 to Thr70 serves as a coordination point for ATP.

It belongs to the LpxK family.

It catalyses the reaction a lipid A disaccharide + ATP = a lipid IVA + ADP + H(+). The protein operates within glycolipid biosynthesis; lipid IV(A) biosynthesis; lipid IV(A) from (3R)-3-hydroxytetradecanoyl-[acyl-carrier-protein] and UDP-N-acetyl-alpha-D-glucosamine: step 6/6. Transfers the gamma-phosphate of ATP to the 4'-position of a tetraacyldisaccharide 1-phosphate intermediate (termed DS-1-P) to form tetraacyldisaccharide 1,4'-bis-phosphate (lipid IVA). The polypeptide is Tetraacyldisaccharide 4'-kinase (Campylobacter jejuni subsp. jejuni serotype O:6 (strain 81116 / NCTC 11828)).